The primary structure comprises 365 residues: Chorismate synthase (365 aa).

NADP(+)-binding residues include R48 and R54. Residues 125 to 127 (RAS), 237 to 238 (NA), G277, 292 to 296 (KPTSS), and R318 contribute to the FMN site.

It belongs to the chorismate synthase family. As to quaternary structure, homotetramer. The cofactor is FMNH2.

It catalyses the reaction 5-O-(1-carboxyvinyl)-3-phosphoshikimate = chorismate + phosphate. Its pathway is metabolic intermediate biosynthesis; chorismate biosynthesis; chorismate from D-erythrose 4-phosphate and phosphoenolpyruvate: step 7/7. Functionally, catalyzes the anti-1,4-elimination of the C-3 phosphate and the C-6 proR hydrogen from 5-enolpyruvylshikimate-3-phosphate (EPSP) to yield chorismate, which is the branch point compound that serves as the starting substrate for the three terminal pathways of aromatic amino acid biosynthesis. This reaction introduces a second double bond into the aromatic ring system. This is Chorismate synthase from Polaromonas sp. (strain JS666 / ATCC BAA-500).